The sequence spans 570 residues: Laccase-3 (570 aa).

The N-terminal stretch at 1-25 (MESFRRFSLLSFIALLAYFAFLASA) is a signal peptide. Plastocyanin-like domains lie at 33 to 149 (VITP…PRLG) and 159 to 310 (RDIP…YVNA). Residue N79 is glycosylated (N-linked (GlcNAc...) asparagine). Residues H83, H85, H128, and H130 each contribute to the Cu cation site. N-linked (GlcNAc...) asparagine glycans are attached at residues N188, N298, N332, N383, N393, and N433. The Plastocyanin-like 3 domain maps to 419-554 (DFPPVPPVQF…AMVFLVENGR (136 aa)). Cu cation is bound by residues H471, H474, H476, H533, C534, H535, and H539.

It belongs to the multicopper oxidase family. Requires Cu cation as cofactor. In terms of tissue distribution, mostly expressed in roots and siliques.

It is found in the secreted. It localises to the extracellular space. The protein localises to the apoplast. The enzyme catalyses 4 hydroquinone + O2 = 4 benzosemiquinone + 2 H2O. Lignin degradation and detoxification of lignin-derived products. The polypeptide is Laccase-3 (LAC3) (Arabidopsis thaliana (Mouse-ear cress)).